Here is a 468-residue protein sequence, read N- to C-terminus: Cyclin-T1.1 (468 aa).

A compositionally biased stretch (basic and acidic residues) spans 336-354; it reads KERGVEEERRKRERDRMAG. The disordered stretch occupies residues 336–468; it reads KERGVEEERR…DMDLEDGELE (133 aa). Residues 387-402 are compositionally biased toward pro residues; sequence APPPIPPQLNFPPPPI. Acidic residues predominate over residues 458–468; sequence SDMDLEDGELE.

This sequence belongs to the cyclin family. Cyclin C subfamily.

Regulatory subunit of the cyclin-dependent kinase pair (CDK9/cyclin T) complex, also called positive transcription elongation factor B (P-TEFb), which is proposed to facilitate the transition from abortive to production elongation by phosphorylating the CTD (carboxy-terminal domain) of the large subunit of RNA polymerase II (RNAP II). This Caenorhabditis elegans protein is Cyclin-T1.1.